The following is a 364-amino-acid chain: MANKTVLFNKHLESNGKMVDFHGWDMPLNYGSQIEEHHAVRQDAGMFDVSHMTVVDVIGDDACAFLRKLLANDVAKLKVPGKALYGGMLDHNGGVIDDLITYYLSDTQYRIVVNSATREKDLAWINEQVKGFSVEVTERPELAMIAVQGPNAKAKAATVFNDTQNAAVEGMKPFFGVQADSLFIATTGYTGETGYEVIVPEAEAEALWQAFLDAGVKPCGLGARDTLRLEAGMNLYGLDMDESVNPLAANMGWTVAWAPEDRDFNGRKALEKIKAEGADKLVGLIMDAKGVIRHGMSVFFTDSDGVEQQGTITSGTFSPTLGYSIAMARVPNTIGDVAEVEMRKKRVPVKVIAPSFVRNGKQAF.

Belongs to the GcvT family. The glycine cleavage system is composed of four proteins: P, T, L and H.

The enzyme catalyses N(6)-[(R)-S(8)-aminomethyldihydrolipoyl]-L-lysyl-[protein] + (6S)-5,6,7,8-tetrahydrofolate = N(6)-[(R)-dihydrolipoyl]-L-lysyl-[protein] + (6R)-5,10-methylene-5,6,7,8-tetrahydrofolate + NH4(+). Its function is as follows. The glycine cleavage system catalyzes the degradation of glycine. The polypeptide is Aminomethyltransferase (Shewanella piezotolerans (strain WP3 / JCM 13877)).